The following is a 403-amino-acid chain: Tyrosine--tRNA ligase (403 aa).

The short motif at 43–52 (PTAPDLHLGH) is the 'HIGH' region element. Positions 227–231 (KMSKS) match the 'KMSKS' region motif. Lys-230 lines the ATP pocket. The 62-residue stretch at 338-399 (LPIAQLLKQT…GKRKFARVTI (62 aa)) folds into the S4 RNA-binding domain.

This sequence belongs to the class-I aminoacyl-tRNA synthetase family. TyrS type 2 subfamily. Homodimer.

It localises to the cytoplasm. The catalysed reaction is tRNA(Tyr) + L-tyrosine + ATP = L-tyrosyl-tRNA(Tyr) + AMP + diphosphate + H(+). Functionally, catalyzes the attachment of tyrosine to tRNA(Tyr) in a two-step reaction: tyrosine is first activated by ATP to form Tyr-AMP and then transferred to the acceptor end of tRNA(Tyr). The sequence is that of Tyrosine--tRNA ligase from Nitrosospira multiformis (strain ATCC 25196 / NCIMB 11849 / C 71).